The sequence spans 280 residues: Undecaprenyl-diphosphatase (280 aa).

Helical transmembrane passes span F19–G39, F44–Y64, F89–A109, I125–Q145, V156–V176, A197–I217, V226–I246, and G259–I279.

Belongs to the UppP family.

The protein localises to the cell inner membrane. It carries out the reaction di-trans,octa-cis-undecaprenyl diphosphate + H2O = di-trans,octa-cis-undecaprenyl phosphate + phosphate + H(+). Catalyzes the dephosphorylation of undecaprenyl diphosphate (UPP). Confers resistance to bacitracin. This is Undecaprenyl-diphosphatase from Leptospira borgpetersenii serovar Hardjo-bovis (strain L550).